Here is a 272-residue protein sequence, read N- to C-terminus: NH(3)-dependent NAD(+) synthetase (272 aa).

Tyr33 contacts deamido-NAD(+). Residues 45-52, Arg79, and Gln85 contribute to the ATP site; that span reads GISGGQDS. Asp51 serves as a coordination point for Mg(2+). Arg138 provides a ligand contact to deamido-NAD(+). Thr158 serves as a coordination point for ATP. Glu163 contacts Mg(2+). Deamido-NAD(+) is bound by residues Lys171 and Asp178. Residues Lys187 and Thr209 each coordinate ATP. Deamido-NAD(+)-binding positions include Glu224 and 258 to 259; that span reads HK.

This sequence belongs to the NAD synthetase family. Homodimer. In terms of processing, phosphorylated during sporulation.

The enzyme catalyses deamido-NAD(+) + NH4(+) + ATP = AMP + diphosphate + NAD(+) + H(+). It functions in the pathway cofactor biosynthesis; NAD(+) biosynthesis; NAD(+) from deamido-NAD(+) (ammonia route): step 1/1. Functionally, catalyzes the ATP-dependent amidation of deamido-NAD to form NAD. Uses ammonia as a nitrogen source. This chain is NH(3)-dependent NAD(+) synthetase, found in Bacillus subtilis (strain 168).